The sequence spans 438 residues: tRNA modification GTPase MnmE (438 aa).

Positions 20, 78, and 117 each coordinate (6S)-5-formyl-5,6,7,8-tetrahydrofolate. A TrmE-type G domain is found at glycine 214 to tyrosine 359. Position 224 (asparagine 224) interacts with K(+). GTP-binding positions include asparagine 224–threonine 229, threonine 243–threonine 249, and aspartate 268–glycine 271. Serine 228 lines the Mg(2+) pocket. K(+) contacts are provided by threonine 243, isoleucine 245, and threonine 248. Threonine 249 is a binding site for Mg(2+). Lysine 438 serves as a coordination point for (6S)-5-formyl-5,6,7,8-tetrahydrofolate.

This sequence belongs to the TRAFAC class TrmE-Era-EngA-EngB-Septin-like GTPase superfamily. TrmE GTPase family. As to quaternary structure, homodimer. Heterotetramer of two MnmE and two MnmG subunits. It depends on K(+) as a cofactor.

It localises to the cytoplasm. Its function is as follows. Exhibits a very high intrinsic GTPase hydrolysis rate. Involved in the addition of a carboxymethylaminomethyl (cmnm) group at the wobble position (U34) of certain tRNAs, forming tRNA-cmnm(5)s(2)U34. The sequence is that of tRNA modification GTPase MnmE from Ureaplasma parvum serovar 3 (strain ATCC 27815 / 27 / NCTC 11736).